A 333-amino-acid chain; its full sequence is Probable G-protein coupled receptor 33 (333 aa).

Over 1–30 the chain is Extracellular; that stretch reads MDLINSTDYLINASTLVRNSTQFLAPASKM. 3 N-linked (GlcNAc...) asparagine glycosylation sites follow: Asn-5, Asn-12, and Asn-19. Residues 31-53 traverse the membrane as a helical segment; that stretch reads IIALSLYISSIIGTITNGLYLWV. At 54–64 the chain is on the cytoplasmic side; that stretch reads LRFKMKQTVNT. The helical transmembrane segment at 65 to 86 threads the bilayer; sequence LLFFHLILSYFISTMILPFMAT. Over 87-103 the chain is Extracellular; sequence SQLQDNHWNFGTALCKV. Cys-101 and Cys-179 are joined by a disulfide. Residues 104–124 traverse the membrane as a helical segment; it reads FNGTLSLGMFTSVFFLSAIGL. The Cytoplasmic segment spans residues 125-143; the sequence is DRYLLTLHPVWSQQHRTPR. A helical transmembrane segment spans residues 144 to 165; it reads WASSIVLGVWISAAALSIPYLI. The Extracellular portion of the chain corresponds to 166–209; that stretch reads FRQTHHDRKGKVTCQNNYAVSTNWESKEMQALRQWIHVACFISR. Residues 210–230 traverse the membrane as a helical segment; it reads FLLGFLLPFFIIIFCYERVAS. Residues 231–246 lie on the Cytoplasmic side of the membrane; the sequence is KVKERSLFKSSKPFKV. The chain crosses the membrane as a helical span at residues 247 to 268; it reads MMTAIISFFVCWMPYHIHQGLL. Over 269–283 the chain is Extracellular; sequence LTMNQSLLLELTLIL. N-linked (GlcNAc...) asparagine glycosylation is present at Asn-272. A helical transmembrane segment spans residues 284 to 303; it reads TVLTTSFNTIFSPTLYLFVG. The Cytoplasmic portion of the chain corresponds to 304-333; it reads ENFKKVFKKSILALFESTFSEDSSVERTQT.

Belongs to the G-protein coupled receptor 1 family.

The protein localises to the cell membrane. Functionally, orphan receptor; could be a chemoattractant receptor. The sequence is that of Probable G-protein coupled receptor 33 (GPR33) from Pan paniscus (Pygmy chimpanzee).